Consider the following 977-residue polypeptide: Disks large-associated protein 3 (977 aa).

Positions 1 to 10 (MRGYHGDRGS) are enriched in basic and acidic residues. 6 disordered regions span residues 1-30 (MRGY…PAAR), 52-90 (AGLG…SSTF), 137-167 (FHTL…ESPS), 181-289 (AKSH…CLDA), 398-417 (AMGD…SPKA), and 529-582 (PGSS…SADG). A compositionally biased stretch (low complexity) spans 53–73 (GLGHLSPEGPLSLSEGPSSVG). A Phosphoserine modification is found at serine 58. The span at 74-85 (PEGGPGGVGAGG) shows a compositional bias: gly residues. Basic and acidic residues predominate over residues 189–201 (PGKRDYNGPKAEG). A compositionally biased stretch (low complexity) spans 202 to 212 (RSSSGGDSYSG). Basic residues predominate over residues 221-245 (SHHHHHHHHHHHHQSRHGKRSKSKD). Positions 258–271 (GWWSSDDNLDSDSG) are enriched in low complexity. Phosphoserine occurs at positions 404, 407, 410, and 414. The segment covering 538–547 (APPPIPPGSQ) has biased composition (pro residues). Phosphoserine occurs at positions 641 and 643. Disordered stretches follow at residues 739–788 (EGYP…RTSP) and 906–939 (EEKK…RQRQ). A compositionally biased stretch (pro residues) spans 754–763 (PGPPPVPAPG). Composition is skewed to basic and acidic residues over residues 767-777 (GRRDSWMERGS) and 925-939 (PVKE…RQRQ). Phosphoserine is present on residues serine 930, serine 933, and serine 965.

The protein belongs to the SAPAP family. In terms of assembly, interacts with DLG1 and DLG4/PSD-95. In terms of tissue distribution, expressed in most brain regions.

The protein resides in the cell membrane. The protein localises to the postsynaptic density. Its subcellular location is the synapse. Its function is as follows. May play a role in the molecular organization of synapses and neuronal cell signaling. Could be an adapter protein linking ion channel to the subsynaptic cytoskeleton. May induce enrichment of PSD-95/SAP90 at the plasma membrane. The polypeptide is Disks large-associated protein 3 (Dlgap3) (Rattus norvegicus (Rat)).